A 968-amino-acid polypeptide reads, in one-letter code: Catenin delta-1 (968 aa).

Residue Met1 is modified to N-acetylmethionine. Residues 1–357 form a necessary and sufficient for interaction with CCDC85B region; sequence MDDSEVESTA…ASLDSLRKGG (357 aa). Ser4 is modified (phosphoserine). The stretch at 10-46 forms a coiled coil; that stretch reads ASILASVKEQEAQFEKLTRALEEERRHVSAQLERVRV. Ser47 carries the post-translational modification Phosphoserine. Thr59 carries the phosphothreonine modification. Tyr112 carries the post-translational modification Phosphotyrosine; by FYN. Ser125 carries the post-translational modification Phosphoserine. A phosphotyrosine mark is found at Tyr217 and Tyr221. Position 225 is a phosphoserine (Ser225). A Phosphotyrosine modification is found at Tyr228. Phosphoserine occurs at positions 230 and 252. Tyr257 carries the post-translational modification Phosphotyrosine. A phosphoserine mark is found at Ser268 and Ser269. Tyr280 carries the post-translational modification Phosphotyrosine. Ser288 carries the phosphoserine; by PAK5 modification. Tyr291 bears the Phosphotyrosine mark. The Nuclear localization signal (NLS) motif lies at 299–306; that stretch reads MSDYGTAR. Ser300 is modified (phosphoserine). At Thr304 the chain carries Phosphothreonine. Phosphoserine is present on residues Ser320, Ser346, Ser349, and Ser352. ARM repeat units lie at residues 358 to 395, 398 to 437, 441 to 475, and 476 to 516; these read PPPP…HLCY, DKVK…NISF, QDNK…ITGT, and LWNL…NEDC. Lys421 is covalently cross-linked (Glycyl lysine isopeptide (Lys-Gly) (interchain with G-Cter in SUMO2)). Lys517 is covalently cross-linked (Glycyl lysine isopeptide (Lys-Gly) (interchain with G-Cter in SUMO2)). The Nuclear localization signal (NLS) motif lies at 521–528; that stretch reads IEWESVLT. ARM repeat units lie at residues 534–573, 583–624, 653–693, 700–739, 740–780, and 781–826; these read LRNV…DSDS, LRNL…AKKG, ARGY…NLCA, RYIR…NLAV, DARN…SILN, and TINE…ALVL. Phosphothreonine is present on residues Ile566, Asp572, Ser587, and Glu593. Positions 568 to 575 match the Nuclear localization signal (NLS) motif; the sequence is QKDSDSKL. Ser617 is modified (phosphoserine). The short motif at 622–629 is the Nuclear localization signal (NLS) element; it reads KKGKDEWF. At Ser713 the chain carries Phosphoserine. Residues Glu788, Lys794, and Asn809 each carry the phosphothreonine modification. The residue at position 811 (Ser811) is a Phosphoserine. Phosphothreonine occurs at positions 815, 835, and 841. A Phosphoserine modification is found at Ser847. Positions 855 to 944 are disordered; the sequence is NASRSQSSHS…LMQDEGQESL (90 aa). Ala856 carries the post-translational modification Phosphothreonine. Residues Ser857, Ser859, and Ser861 each carry the phosphoserine modification. Ser862 is subject to Phosphothreonine. Ser864 bears the Phosphoserine mark. Tyr865 bears the Phosphotyrosine mark. Ser868 is modified (phosphoserine). The residue at position 869 (Thr869) is a Phosphothreonine. The segment covering 875–888 has biased composition (basic and acidic residues); the sequence is RNQKSDKKPDREEI. Position 879 is a phosphoserine (Ser879). A Glycyl lysine isopeptide (Lys-Gly) (interchain with G-Cter in SUMO2) cross-link involves residue Lys882. Gln889 and Ser895 each carry phosphothreonine. The segment covering 889-908 has biased composition (polar residues); it reads QMSNMGSNTKSLDNNYSTPN. The residue at position 899 (Ser899) is a Phosphoserine. Tyr904 bears the Phosphotyrosine mark. Phosphothreonine occurs at positions 906, 910, and 916. Positions 909–922 are enriched in basic and acidic residues; that stretch reads ERGDHNRTLDRSGD. Phosphoserine is present on residues Ser920 and Ser943.

The protein belongs to the beta-catenin family. In terms of assembly, belongs to a multiprotein cell-cell adhesion complex that also contains E-cadherin/CDH1, alpha-catenin/CTNNA1, beta-catenin/CTNNB1, and gamma-catenin/JUP. Component of a cadherin:catenin adhesion complex composed of at least of CDH26, beta-catenin/CTNNB1, alpha-catenin/CTNNA1 and p120 catenin/CTNND1. Binds to the C-terminal fragment of PSEN1 and mutually competes for CDH1. Interacts with ZBTB33. Interacts with GLIS2. Interacts with FER. Interacts with NANOS1 (via N-terminal region). Interacts (via N-terminus) with GNA12; the interaction regulates CDH1-mediated cell-cell adhesion. Interacts with GNA13. Interacts with CCDC85B. Interacts with PLPP3; negatively regulates the PLPP3-mediated stabilization of CTNNB1. Interacts with DSG3; the interaction facilitates DSG3 localization and retention at cell-cell junctions. Interacts with CTNND1/p120-catenin; the interaction controls CADH5 endocytosis. In terms of processing, phosphorylated by FER and other protein-tyrosine kinases. Phosphorylated at Ser-288 by PAK5. Dephosphorylated by PTPRJ. In terms of tissue distribution, expressed in vascular endothelium. Melanocytes and melanoma cells primarily express the long isoform 1A, whereas keratinocytes express shorter isoforms, especially 3A. The shortest isoform 4A, is detected in normal keratinocytes and melanocytes, and generally lost from cells derived from squamous cell carcinomas or melanomas. The C-terminal alternatively spliced exon B is present in the p120ctn transcripts in the colon, intestine and prostate, but lost in several tumor tissues derived from these organs.

It localises to the cell junction. It is found in the adherens junction. The protein resides in the cytoplasm. The protein localises to the nucleus. Its subcellular location is the cell membrane. Key regulator of cell-cell adhesion that associates with and regulates the cell adhesion properties of both C-, E- and N-cadherins, being critical for their surface stability. Promotes localization and retention of DSG3 at cell-cell junctions, via its interaction with DSG3. Beside cell-cell adhesion, regulates gene transcription through several transcription factors including ZBTB33/Kaiso2 and GLIS2, and the activity of Rho family GTPases and downstream cytoskeletal dynamics. Implicated both in cell transformation by SRC and in ligand-induced receptor signaling through the EGF, PDGF, CSF-1 and ERBB2 receptors. This Homo sapiens (Human) protein is Catenin delta-1.